The sequence spans 152 residues: uncharacterized protein (152 aa).

3 helical membrane-spanning segments follow: residues 15 to 35, 43 to 63, and 117 to 137; these read IINV…IYDI, LVVA…LILT, and TFLL…KLLI.

It to M.jannaschii MJ0129 and MJ0587.

Its subcellular location is the cell membrane. This is an uncharacterized protein from Methanocaldococcus jannaschii (strain ATCC 43067 / DSM 2661 / JAL-1 / JCM 10045 / NBRC 100440) (Methanococcus jannaschii).